The following is a 395-amino-acid chain: Elongation factor Tu (395 aa).

The 195-residue stretch at 10–204 (KPHVNIGTIG…NVDEYIPLPQ (195 aa)) folds into the tr-type G domain. The tract at residues 19 to 26 (GHVDHGKT) is G1. Position 19 to 26 (19 to 26 (GHVDHGKT)) interacts with GTP. Residue T26 participates in Mg(2+) binding. Positions 60–64 (GITIN) are G2. Positions 81–84 (DCPG) are G3. Residues 81–85 (DCPGH) and 136–139 (NKVD) contribute to the GTP site. Residues 136-139 (NKVD) are G4. The G5 stretch occupies residues 174-176 (SAL).

It belongs to the TRAFAC class translation factor GTPase superfamily. Classic translation factor GTPase family. EF-Tu/EF-1A subfamily. In terms of assembly, monomer.

It is found in the cytoplasm. It catalyses the reaction GTP + H2O = GDP + phosphate + H(+). Functionally, GTP hydrolase that promotes the GTP-dependent binding of aminoacyl-tRNA to the A-site of ribosomes during protein biosynthesis. The polypeptide is Elongation factor Tu (Amoebophilus asiaticus (strain 5a2)).